The following is a 391-amino-acid chain: Na(+)/H(+) antiporter NhaA (391 aa).

A run of 11 helical transmembrane segments spans residues 14-34 (AGGI…NSPL), 59-79 (LIHW…GLEV), 95-115 (SLPT…YLIF), 124-144 (VGWA…MALL), 154-174 (VFLL…IAMF), 177-197 (TDLS…LVGL), 213-233 (LILW…GVII), 261-281 (FVIL…GMSL), 292-312 (IALG…FVAV), 331-351 (VAVM…LAFI), and 363-383 (LGIL…LSKV).

This sequence belongs to the NhaA Na(+)/H(+) (TC 2.A.33) antiporter family.

It is found in the cell inner membrane. It catalyses the reaction Na(+)(in) + 2 H(+)(out) = Na(+)(out) + 2 H(+)(in). Its function is as follows. Na(+)/H(+) antiporter that extrudes sodium in exchange for external protons. The sequence is that of Na(+)/H(+) antiporter NhaA from Shewanella loihica (strain ATCC BAA-1088 / PV-4).